The following is a 106-amino-acid chain: Toxin-like structure LSTX-D6 (106 aa).

The N-terminal stretch at 1–20 (MMKVLVVAALLVTLISYSSS) is a signal peptide. The propeptide occupies 21–41 (EGIDDLEADELLSLMANEQTR). 4 cysteine pairs are disulfide-bonded: Cys45-Cys60, Cys52-Cys69, Cys59-Cys85, and Cys71-Cys83.

The protein belongs to the neurotoxin 19 (CSTX) family. 02 (D7) subfamily. As to expression, expressed by the venom gland.

The protein resides in the secreted. The polypeptide is Toxin-like structure LSTX-D6 (Lycosa singoriensis (Wolf spider)).